Reading from the N-terminus, the 185-residue chain is ATP-dependent protease subunit HslV (185 aa).

T12 is a catalytic residue. The Na(+) site is built by A168, C171, and T174.

The protein belongs to the peptidase T1B family. HslV subfamily. A double ring-shaped homohexamer of HslV is capped on each side by a ring-shaped HslU homohexamer. The assembly of the HslU/HslV complex is dependent on binding of ATP.

The protein resides in the cytoplasm. The catalysed reaction is ATP-dependent cleavage of peptide bonds with broad specificity.. Its activity is regulated as follows. Allosterically activated by HslU binding. In terms of biological role, protease subunit of a proteasome-like degradation complex believed to be a general protein degrading machinery. The sequence is that of ATP-dependent protease subunit HslV from Dinoroseobacter shibae (strain DSM 16493 / NCIMB 14021 / DFL 12).